The chain runs to 239 residues: MIRKKILMAAIPLFVISGADAAVSLDRTRAVFDGSEKSMTLDISNDNKQLPYLAQAWIENENQEKIITGPVIATPPVQRLEPGAKSMVRLSTTPDISKLPQDRESLFYFNLREIPPRSEKANVLQIALQTKIKLFYRPAAIKTRPNEVWQDQLILNKVSGGYRIENPTPYYVTVIGLGGSEKQAEEGEFETVMLSPRSEQTVKSANYNTPYLSYINDYGGRPVLSFICNGSRCSVKKEK.

The N-terminal stretch at 1–21 is a signal peptide; the sequence is MIRKKILMAAIPLFVISGADA. Cys228 and Cys233 form a disulfide bridge.

This sequence belongs to the periplasmic pilus chaperone family. In terms of assembly, interacts with substrates PapG and PapK.

Its subcellular location is the periplasm. Functionally, binds and caps interactive surfaces on P pilus subunits to prevent them from participating in non-productive interactions. Facilitates the import of P pilus subunits into the periplasm, probably also facilitates their folding. Chaperone-subunit complexes are then targeted to the PapC outer membrane usher where the chaperone must uncap from the subunits. Coexpression of this chaperone with individual, otherwise toxic, P pilus subunits (tested with PapA, PapE and PapG) suppresses their growth inhibitory phenotype. This is Chaperone protein PapD (papD) from Escherichia coli.